The following is an 83-amino-acid chain: Protein FAM240A (83 aa).

Belongs to the FAM240 family.

The protein is Protein FAM240A of Homo sapiens (Human).